The primary structure comprises 430 residues: Tektin-2 (430 aa).

Coiled-coil stretches lie at residues 75-162 (KETL…FQHL) and 226-380 (KNRA…IACK).

It belongs to the tektin family. As to quaternary structure, microtubule inner protein component of sperm flagellar doublet microtubules. May interact with CCDC172. In terms of processing, ubiquitinated, leading to its degradation. Deubiquitinated by USP16, promoting its stability. Post-translationally, tyrosine phosphorylated. As to expression, expressed in the testes (at protein level).

The protein resides in the cytoplasm. The protein localises to the cytoskeleton. It is found in the cilium axoneme. It localises to the flagellum axoneme. Its subcellular location is the microtubule organizing center. Its function is as follows. Microtubule inner protein (MIP) part of the dynein-decorated doublet microtubules (DMTs) in cilia and flagellar axoneme. Plays a key role in the assembly or attachment of the inner dynein arm to microtubules in sperm flagella and tracheal cilia. Forms filamentous polymers in the walls of ciliary and flagellar microtubules. The protein is Tektin-2 (Tekt2) of Mus musculus (Mouse).